We begin with the raw amino-acid sequence, 224 residues long: SPI-2 type 3 secretion system stator protein (224 aa).

It belongs to the SctL stator family. In terms of assembly, the core secretion machinery of the T3SS is composed of approximately 20 different proteins, including cytoplasmic components, a base, an export apparatus and a needle. This subunit is part of the cytosolic complex. Interacts directly with SsaN/SctN2 (T3SS-2 ATPase).

It localises to the cytoplasm. Its function is as follows. Component of the type III secretion system (T3SS), also called injectisome, which is used to inject bacterial effector proteins into eukaryotic host cells. Acts as a regulator of the SsaN/SctN2 ATPase activity. In Salmonella typhimurium (strain LT2 / SGSC1412 / ATCC 700720), this protein is SPI-2 type 3 secretion system stator protein.